The sequence spans 465 residues: Ribulose bisphosphate carboxylase large chain (465 aa).

N6,N6,N6-trimethyllysine is present on Lys4. Thr163 contacts substrate. Lys165 (proton acceptor) is an active-site residue. Lys167 is a binding site for substrate. Mg(2+) is bound by residues Lys191, Asp193, and Glu194. An N6-carboxylysine modification is found at Lys191. His284 (proton acceptor) is an active-site residue. Residues Arg285, His317, and Ser369 each coordinate substrate.

It belongs to the RuBisCO large chain family. Type I subfamily. Heterohexadecamer of 8 large chains and 8 small chains; disulfide-linked. The disulfide link is formed within the large subunit homodimers. Mg(2+) serves as cofactor. The disulfide bond which can form in the large chain dimeric partners within the hexadecamer appears to be associated with oxidative stress and protein turnover.

It is found in the plastid. The protein localises to the chloroplast. It carries out the reaction 2 (2R)-3-phosphoglycerate + 2 H(+) = D-ribulose 1,5-bisphosphate + CO2 + H2O. The enzyme catalyses D-ribulose 1,5-bisphosphate + O2 = 2-phosphoglycolate + (2R)-3-phosphoglycerate + 2 H(+). In terms of biological role, ruBisCO catalyzes two reactions: the carboxylation of D-ribulose 1,5-bisphosphate, the primary event in carbon dioxide fixation, as well as the oxidative fragmentation of the pentose substrate in the photorespiration process. Both reactions occur simultaneously and in competition at the same active site. In Trochodendron aralioides (Wheel tree), this protein is Ribulose bisphosphate carboxylase large chain.